The primary structure comprises 89 residues: uncharacterized protein (89 aa).

A run of 2 helical transmembrane segments spans residues 1–21 (MFLA…ISLI) and 28–48 (GISL…TIAA).

The protein localises to the cell membrane. This is an uncharacterized protein from Methanocaldococcus jannaschii (strain ATCC 43067 / DSM 2661 / JAL-1 / JCM 10045 / NBRC 100440) (Methanococcus jannaschii).